Here is a 396-residue protein sequence, read N- to C-terminus: MTQSEKIINLTNHYGAHNYVPLPIVISEAEGVWVKDPEGNTYMDMLSAYSAVNQGHRHPRIIQALKDQADKVTLVSRAFHSDNLGQWHEKICKLAGKDKALPMNTGAEAVETALKAARRWAYDVKGIEPNKAEIIAFNGNFHGRTMAPVSLSSEAEYQRGYGPLLEGFRKVEFGDVNQLKAAINKNTAAILVEPIQGEAGINVPPEGYLKTIRELCDEHQILFIADEIQAGLGRSGKLFATDWDHVKPDVYILGKALGGGVFPISVVLADNEVLDVFTPGSHGSTFGGNPLASAVSIAAIDVIIDEDLPGRSLELGEYFKSELKKIEHPSIKEVRGRGLFIGIELHESARPYCEALKEQGLLCKETHDTVIRFAPPLVITKEELDMALEKIKSVFA.

N6-(pyridoxal phosphate)lysine is present on Lys-255.

The protein belongs to the class-III pyridoxal-phosphate-dependent aminotransferase family. OAT subfamily. Pyridoxal 5'-phosphate serves as cofactor.

Its subcellular location is the cytoplasm. The enzyme catalyses a 2-oxocarboxylate + L-ornithine = L-glutamate 5-semialdehyde + an L-alpha-amino acid. It functions in the pathway amino-acid biosynthesis; L-proline biosynthesis; L-glutamate 5-semialdehyde from L-ornithine: step 1/1. In terms of biological role, catalyzes the interconversion of ornithine to glutamate semialdehyde. This is Ornithine aminotransferase from Staphylococcus epidermidis (strain ATCC 12228 / FDA PCI 1200).